The sequence spans 139 residues: Putative pre-16S rRNA nuclease (139 aa).

This sequence belongs to the YqgF nuclease family.

The protein resides in the cytoplasm. Its function is as follows. Could be a nuclease involved in processing of the 5'-end of pre-16S rRNA. The chain is Putative pre-16S rRNA nuclease from Legionella pneumophila (strain Paris).